The chain runs to 398 residues: Lysophospholipid transporter LplT (398 aa).

Helical transmembrane passes span 19–39 (VIVAQFLSAFGDNALLFATLA), 53–73 (VLQMVFVGAYILFAPFVGQIA), 96–116 (ICLGVNPFVGYTLVGIGAAAY), 139–159 (LMEASTIAAILLGSVAGGVLA), 164–184 (IAALVACTLAYAGAVVANLFI), 195–213 (SWQLAAMIRSFFCACVVLW), 227–247 (LFWGAGVTLRFLVVLWVPVAL), 257–277 (YLNAMVAVGIVVGAGAAAKLV), 281–301 (TVSRCMPAGILIGVVVAMFSL), 304–324 (ALLPAYALLLLIGILGGFFVV), 352–372 (NSTMLLMLGLYSLAVMVGVPA), and 373–393 (VATGIGFGVLFALAIAALWIW).

The protein belongs to the major facilitator superfamily. LplT (TC 2.A.1.42) family.

The protein resides in the cell inner membrane. Functionally, catalyzes the facilitated diffusion of 2-acyl-glycero-3-phosphoethanolamine (2-acyl-GPE) into the cell. This is Lysophospholipid transporter LplT from Salmonella arizonae (strain ATCC BAA-731 / CDC346-86 / RSK2980).